Here is a 120-residue protein sequence, read N- to C-terminus: Peptidyl-tRNA hydrolase (120 aa).

This sequence belongs to the PTH2 family.

It localises to the cytoplasm. It carries out the reaction an N-acyl-L-alpha-aminoacyl-tRNA + H2O = an N-acyl-L-amino acid + a tRNA + H(+). Functionally, the natural substrate for this enzyme may be peptidyl-tRNAs which drop off the ribosome during protein synthesis. The sequence is that of Peptidyl-tRNA hydrolase from Saccharolobus islandicus (strain Y.N.15.51 / Yellowstone #2) (Sulfolobus islandicus).